The chain runs to 38 residues: Photosystem I reaction center subunit IX (38 aa).

A helical membrane pass occupies residues 4–24; sequence FLTTAPVFSAIWFTLTAGIMI.

This sequence belongs to the PsaJ family.

The protein resides in the plastid. Its subcellular location is the organellar chromatophore thylakoid membrane. Its function is as follows. May help in the organization of the PsaE and PsaF subunits. The chain is Photosystem I reaction center subunit IX from Paulinella chromatophora.